The primary structure comprises 70 residues: uncharacterized protein (70 aa).

2 consecutive transmembrane segments (helical) span residues 19–39 (VIALVVFGGLIVSVVGFVVGL) and 40–60 (LFKLLVFVALVGGLIYVVRKF).

The protein resides in the cell membrane. This is an uncharacterized protein from Streptomyces coelicolor (strain ATCC BAA-471 / A3(2) / M145).